The chain runs to 320 residues: o-succinylbenzoate synthase (320 aa).

Lysine 133 serves as the catalytic Proton donor. Mg(2+) contacts are provided by aspartate 161, glutamate 190, and aspartate 213. The active-site Proton acceptor is the lysine 235.

It belongs to the mandelate racemase/muconate lactonizing enzyme family. MenC type 1 subfamily. The cofactor is a divalent metal cation.

The enzyme catalyses (1R,6R)-6-hydroxy-2-succinyl-cyclohexa-2,4-diene-1-carboxylate = 2-succinylbenzoate + H2O. It functions in the pathway quinol/quinone metabolism; 1,4-dihydroxy-2-naphthoate biosynthesis; 1,4-dihydroxy-2-naphthoate from chorismate: step 4/7. It participates in quinol/quinone metabolism; menaquinone biosynthesis. Converts 2-succinyl-6-hydroxy-2,4-cyclohexadiene-1-carboxylate (SHCHC) to 2-succinylbenzoate (OSB). In Escherichia coli O9:H4 (strain HS), this protein is o-succinylbenzoate synthase.